The chain runs to 310 residues: Vomeronasal type-1 receptor 40 (310 aa).

Topologically, residues 1-20 (MNKANMLRTDKDMQIILFSE) are extracellular. Residues 21-41 (VSVGISANSILFIAHVCMILG) traverse the membrane as a helical segment. The Cytoplasmic segment spans residues 42 to 50 (ENRPKPIDL). A helical transmembrane segment spans residues 51-71 (YIAFLSLTQLMLLITMGLIAV). The Extracellular portion of the chain corresponds to 72–93 (DMFLSQGIWDSTTCQSLIYLHR). C85 and C172 are joined by a disulfide. A helical transmembrane segment spans residues 94–114 (LLRGLSLCATCLLNILWTITL). Residues 115–134 (SSRSFCSTKFKHKSPHHISG) lie on the Cytoplasmic side of the membrane. Residues 135–155 (AFIFFCVLYMSFSSHLFISII) form a helical membrane-spanning segment. The Extracellular segment spans residues 156–190 (ATHNLTSENFIYVTQSCSLLPLSYSRTSMFSAPMA). N-linked (GlcNAc...) asparagine glycosylation occurs at N159. A helical transmembrane segment spans residues 191–211 (IREAFLVSLMALSSGYMVALL). The Cytoplasmic segment spans residues 212-238 (WRHKKQAQHLHSTSLSSKASPEQRATR). Residues 239-259 (TILLLMSFFVVLYILENAVFY) form a helical membrane-spanning segment. Residues 260–268 (SRIKFKDGS) are Extracellular-facing. Residues 269-289 (ILYCVQIILCHSYATVNPFVF) traverse the membrane as a helical segment. Residues 290 to 310 (ICTEKHIIKFWESKCGRIVNI) are Cytoplasmic-facing.

Belongs to the G-protein coupled receptor 1 family.

It localises to the cell membrane. In terms of biological role, putative pheromone receptor implicated in the regulation of social and reproductive behavior. This Mus musculus (Mouse) protein is Vomeronasal type-1 receptor 40 (Vmn1r40).